Consider the following 225-residue polypeptide: MNSIEFPLLDRTTQNSVISTTLNDLSNWSRLSSLWPLLYGTSCCFIEFASLIGSRFDFDRYGLVPRSSPRQADLILTAGTVTMKMAPSLVRLYEQMPEPKYVIAMGACTITGGMFSTDSYSTVRGVDKLIPVDVYLPGCPPKPEAVIDAITKLRKKISREIYEDRIRSQQGDRCFTTNHKFCLVRSTRTGNYNQGLLYQPPSTSEIPPETFFNYKGSLSSHELVN.

Cys43, Cys44, Cys108, and Cys139 together coordinate [4Fe-4S] cluster.

Belongs to the complex I 20 kDa subunit family. As to quaternary structure, NDH is composed of at least 16 different subunits, 5 of which are encoded in the nucleus. It depends on [4Fe-4S] cluster as a cofactor.

Its subcellular location is the plastid. It is found in the chloroplast thylakoid membrane. It catalyses the reaction a plastoquinone + NADH + (n+1) H(+)(in) = a plastoquinol + NAD(+) + n H(+)(out). The catalysed reaction is a plastoquinone + NADPH + (n+1) H(+)(in) = a plastoquinol + NADP(+) + n H(+)(out). Its function is as follows. NDH shuttles electrons from NAD(P)H:plastoquinone, via FMN and iron-sulfur (Fe-S) centers, to quinones in the photosynthetic chain and possibly in a chloroplast respiratory chain. The immediate electron acceptor for the enzyme in this species is believed to be plastoquinone. Couples the redox reaction to proton translocation, and thus conserves the redox energy in a proton gradient. This chain is NAD(P)H-quinone oxidoreductase subunit K, chloroplastic, found in Gossypium barbadense (Sea Island cotton).